The following is a 177-amino-acid chain: Protein OPG036 (177 aa).

Belongs to the poxviridae OPG036 family.

The protein localises to the host nucleus. Functionally, plays a role in the inhibition of host innate immune response. Within the host nucleus, inhibits activation of interferon-beta promoter by inhibiting IRF3 activation. This Monkeypox virus protein is Protein OPG036 (OPG036).